Consider the following 511-residue polypeptide: Maturase K (511 aa).

It belongs to the intron maturase 2 family. MatK subfamily.

It is found in the plastid. The protein localises to the chloroplast. In terms of biological role, usually encoded in the trnK tRNA gene intron. Probably assists in splicing its own and other chloroplast group II introns. The chain is Maturase K from Brachypodium sylvaticum (False brome).